A 437-amino-acid polypeptide reads, in one-letter code: Sodium/bile acid cotransporter 4 (437 aa).

At 1–103 (MDSLDNTTLL…PPFWDTPLNH (103 aa)) the chain is on the extracellular side. N-linked (GlcNAc...) asparagine glycosylation is found at Asn-6 and Asn-20. Residues 15–79 (SLLPDNLTLS…SSSLTVGVAG (65 aa)) are disordered. Positions 22 to 41 (TLSPNAGSPSASTLSPLAVT) are enriched in polar residues. Residues 42-74 (SSPGPGLSLAPSPSIGFSPEATPTPEPTSSSLT) are compositionally biased toward low complexity. Residues 104–124 (GLNVFVGAALCITMLGLGCTV) traverse the membrane as a helical segment. Topologically, residues 125–140 (DVNHFGAHVRRPVGAL) are cytoplasmic. The helical transmembrane segment at 141–161 (LAALCQFGFLPLLAFLLALIF) threads the bilayer. Over 162–197 (KLDEVAAVAVLLCGCCPGGNLSNLMSLLVDGDMNLS) the chain is Extracellular. N-linked (GlcNAc...) asparagine glycans are attached at residues Asn-181 and Asn-195. A helical transmembrane segment spans residues 198–218 (IIMTISSTLLALVLMPLCLWI). Residues 219-233 (YSRAWINTPLVQLLP) are Cytoplasmic-facing. A helical transmembrane segment spans residues 234-254 (LGAVTLTLCSTLIPIGLGVFI). Residues 255-267 (RYKYNRVADYIVK) lie on the Extracellular side of the membrane. The chain crosses the membrane as a helical span at residues 268–288 (VSLWSLLVTLVVLFIMTGTML). Residues 289–291 (GPE) are Cytoplasmic-facing. The chain crosses the membrane as a helical span at residues 292-312 (LLASIPATVYVVAIFMPLAGY). Residues 313–360 (ASGYGLATLFHLPPNCKRTVCLETGSQNVQLCTAILKLAFPPRFIGSM) are Extracellular-facing. A helical transmembrane segment spans residues 361–381 (YMFPLLYALFQSAEAGVFVLI). Residues 382–437 (YKMYGSEILHKREALDEDEDTDISYKKLKEEEMADTSYGTVGTDDLVMMETTQTAL) lie on the Cytoplasmic side of the membrane.

This sequence belongs to the bile acid:sodium symporter (BASS) (TC 2.A.28) family. Activated following N-terminal proteolytic cleavage by thrombin and/or proteases. Highest expression in the brain and significantly above background levels in the eye, prostate, and whole embryo tissue preparations.

The protein resides in the cell membrane. Functionally, transporter for bile acids. This is Sodium/bile acid cotransporter 4 (Slc10a4) from Mus musculus (Mouse).